The sequence spans 82 residues: Large ribosomal subunit protein uL23 (82 aa).

The protein belongs to the universal ribosomal protein uL23 family. As to quaternary structure, part of the 50S ribosomal subunit. Contacts protein L29.

Binds to 23S rRNA. One of the proteins that surrounds the polypeptide exit tunnel on the outside of the ribosome. The sequence is that of Large ribosomal subunit protein uL23 from Methanospirillum hungatei JF-1 (strain ATCC 27890 / DSM 864 / NBRC 100397 / JF-1).